The chain runs to 319 residues: R-phycoerythrin gamma chain, chloroplastic (319 aa).

Residues 1 to 71 constitute a chloroplast transit peptide; sequence MDSPAFAVTG…RPKKLASYKR (71 aa). Cysteine 96 and cysteine 135 together coordinate phycourobilin. Position 212 (cysteine 212) interacts with (2R,3E)-phycoerythrobilin. Cysteine 299 is a binding site for phycourobilin.

Heteromer of 4 alpha, 4 beta and one gamma chains. Contains four covalently linked bilin chromophores.

Its subcellular location is the plastid. It localises to the chloroplast thylakoid membrane. This Corallina officinalis (Coral seaweed) protein is R-phycoerythrin gamma chain, chloroplastic.